Here is a 403-residue protein sequence, read N- to C-terminus: Phosphopentomutase (403 aa).

Mn(2+) contacts are provided by Asp-13, Asp-298, His-303, Asp-339, His-340, and His-351.

This sequence belongs to the phosphopentomutase family. Requires Mn(2+) as cofactor.

Its subcellular location is the cytoplasm. The enzyme catalyses 2-deoxy-alpha-D-ribose 1-phosphate = 2-deoxy-D-ribose 5-phosphate. The catalysed reaction is alpha-D-ribose 1-phosphate = D-ribose 5-phosphate. The protein operates within carbohydrate degradation; 2-deoxy-D-ribose 1-phosphate degradation; D-glyceraldehyde 3-phosphate and acetaldehyde from 2-deoxy-alpha-D-ribose 1-phosphate: step 1/2. Its function is as follows. Isomerase that catalyzes the conversion of deoxy-ribose 1-phosphate (dRib-1-P) and ribose 1-phosphate (Rib-1-P) to deoxy-ribose 5-phosphate (dRib-5-P) and ribose 5-phosphate (Rib-5-P), respectively. The sequence is that of Phosphopentomutase from Streptococcus pyogenes serotype M4 (strain MGAS10750).